The sequence spans 549 residues: FERM domain-containing protein 1 (549 aa).

Residues 1 to 40 form a disordered region; it reads MAVPPRGRGIDPARTNPDTFPPSGARCMEPSPERPACSQQ. Residues 54–369 form the FERM domain; the sequence is RDVLVLLPSR…DELELDLASR (316 aa). 2 disordered regions span residues 377-400 and 422-464; these read SSQHCPHCLSRHSADSHGSSYTSG and HGLH…GQSA. Residues 430–443 are compositionally biased toward low complexity; that stretch reads SSSPRTSRSHPSTR. Polar residues predominate over residues 444–462; that stretch reads GDSQATRQEPCTQVRTRGQ.

This chain is FERM domain-containing protein 1 (FRMD1), found in Homo sapiens (Human).